The chain runs to 472 residues: Homeobox protein PKNOX2 (472 aa).

The tract at residues 1 to 62 (MMQHASPAPA…STPVPSAPID (62 aa)) is disordered. Residues 26-38 (DSPQMTATTQPPS) are compositionally biased toward polar residues. Residues 46–56 (SAPSAAASTPV) show a composition bias toward low complexity. The 84-residue stretch at 96-179 (GSECITSASF…MHSDNLLRND (84 aa)) folds into the MEIS N-terminal domain. A DNA-binding region (homeobox) is located at residues 291–350 (KRGVLPKHATNIMRSWLFQHLMHPYPTEDEKRQIAAQTNLTLLQVNNWFVNARRRILQPM). Disordered stretches follow at residues 351-371 (LDASNPDPAPKAKKIKSQHRP), 386-405 (QQQGGAPGTNPDGSINLDNL), and 423-472 (AAHD…DSLV). Over residues 361-371 (KAKKIKSQHRP) the composition is skewed to basic residues. Residues 396 to 405 (PDGSINLDNL) are compositionally biased toward polar residues. Over residues 429–454 (LDGTEEEDEDEMEEEEEEELEEEVDE) the composition is skewed to acidic residues.

It belongs to the TALE/MEIS homeobox family.

It localises to the nucleus. The chain is Homeobox protein PKNOX2 (PKNOX2) from Pongo abelii (Sumatran orangutan).